The following is a 199-amino-acid chain: Recombination protein RecR (199 aa).

The C4-type zinc finger occupies 58 to 73 (CQTCHHLSAEPTCEIC). Residues 81 to 175 (GQICVVADSR…RVSRIAYGLP (95 aa)) form the Toprim domain.

This sequence belongs to the RecR family.

Functionally, may play a role in DNA repair. It seems to be involved in an RecBC-independent recombinational process of DNA repair. It may act with RecF and RecO. The polypeptide is Recombination protein RecR (Synechococcus sp. (strain WH7803)).